A 1174-amino-acid polypeptide reads, in one-letter code: ATP-dependent DNA helicase SRS2 (1174 aa).

A UvrD-like helicase ATP-binding domain is found at 14-316 (QLNTQQRAAA…IILVENYRSS (303 aa)). 38-43 (GTGKTK) serves as a coordination point for ATP. The segment at 222–243 (LLMYTFRLLTRVRVLSNIKHVL) is leucine-zipper. Residue R314 coordinates ATP. In terms of domain architecture, UvrD-like helicase C-terminal spans 317-654 (QKILNTSEIL…TISTIHGAKG (338 aa)). The disordered stretch occupies residues 676 to 704 (DDKKDESEEDEEEDQENSKKDASPKKTRV). S833 carries the phosphoserine modification. Disordered regions lie at residues 865 to 896 (SKIN…SPTK), 909 to 973 (NVPS…DKVT), and 994 to 1024 (ELHP…SNSD). 2 stretches are compositionally biased toward polar residues: residues 909 to 922 (NVPS…STGK) and 935 to 955 (TDIS…NKTS). The span at 956 to 973 (HMSDDLMRPSPTRKDKVT) shows a compositional bias: basic and acidic residues. Low complexity predominate over residues 1007-1023 (SLTSSEFSGFSSACSNS).

This sequence belongs to the helicase family. UvrD subfamily.

The protein resides in the nucleus. It carries out the reaction Couples ATP hydrolysis with the unwinding of duplex DNA by translocating in the 3'-5' direction.. The catalysed reaction is ATP + H2O = ADP + phosphate + H(+). ATP-dependent DNA helicase involved in DNA repair at least for UV-induced lesions. The polarity of the helicase activity was determined to be 3' to 5'. The chain is ATP-dependent DNA helicase SRS2 (SRS2) from Saccharomyces cerevisiae (strain ATCC 204508 / S288c) (Baker's yeast).